The primary structure comprises 334 residues: Aspartate carbamoyltransferase catalytic subunit (334 aa).

R71 and T72 together coordinate carbamoyl phosphate. K99 is an L-aspartate binding site. Positions 121, 151, and 154 each coordinate carbamoyl phosphate. The L-aspartate site is built by R184 and R239. Residues G280 and P281 each contribute to the carbamoyl phosphate site.

This sequence belongs to the aspartate/ornithine carbamoyltransferase superfamily. ATCase family. As to quaternary structure, heterododecamer (2C3:3R2) of six catalytic PyrB chains organized as two trimers (C3), and six regulatory PyrI chains organized as three dimers (R2).

It catalyses the reaction carbamoyl phosphate + L-aspartate = N-carbamoyl-L-aspartate + phosphate + H(+). It functions in the pathway pyrimidine metabolism; UMP biosynthesis via de novo pathway; (S)-dihydroorotate from bicarbonate: step 2/3. Catalyzes the condensation of carbamoyl phosphate and aspartate to form carbamoyl aspartate and inorganic phosphate, the committed step in the de novo pyrimidine nucleotide biosynthesis pathway. This is Aspartate carbamoyltransferase catalytic subunit from Pseudomonas fluorescens (strain ATCC BAA-477 / NRRL B-23932 / Pf-5).